Here is a 440-residue protein sequence, read N- to C-terminus: Thymidine phosphorylase (440 aa).

It belongs to the thymidine/pyrimidine-nucleoside phosphorylase family. As to quaternary structure, homodimer.

It catalyses the reaction thymidine + phosphate = 2-deoxy-alpha-D-ribose 1-phosphate + thymine. It participates in pyrimidine metabolism; dTMP biosynthesis via salvage pathway; dTMP from thymine: step 1/2. In terms of biological role, the enzymes which catalyze the reversible phosphorolysis of pyrimidine nucleosides are involved in the degradation of these compounds and in their utilization as carbon and energy sources, or in the rescue of pyrimidine bases for nucleotide synthesis. The chain is Thymidine phosphorylase from Cronobacter sakazakii (strain ATCC BAA-894) (Enterobacter sakazakii).